A 510-amino-acid chain; its full sequence is Laccase (510 aa).

4 Plastocyanin-like domains span residues 45–79 (PTKL…LPLK), 99–174 (KTVV…LISD), 242–317 (YLEV…IVLK), and 372–506 (LTLT…MRPM). His103, His105, His151, and His153 together coordinate Cu cation. The Cu cation site is built by His419, His422, His424, His491, Cys492, His493, His497, and Met502.

It belongs to the multicopper oxidase family. The cofactor is Cu(2+).

The enzyme catalyses 4 hydroquinone + O2 = 4 benzosemiquinone + 2 H2O. With respect to regulation, resistant to alkali and organic solvents such as methanol, ethanol and acetone. Resistant to EDTA, which might be explained by the spatial protection of copper ions in the active sites. Inhibited by DMSO. Strongly inhibited by Fe(2+) and DTT. Multicopper oxidase that catalyzes the oxidation of a variety of substrates, including phenolic and non-phenolic compounds. Substrates include 2,6-dimethoxyphenol (2,6-DMP) and the non-phenolic compound 2,2'-azino-bis(3-ethylbenzothiazoline-6-sulfonic acid) (ABTS). Cannot use guaiacol and catechol. The protein is Laccase of Bacillus stratosphericus.